Reading from the N-terminus, the 664-residue chain is Phosphomethylpyrimidine synthase (664 aa).

Polar residues-rich tracts occupy residues 1–10 (MSTEPLSINP) and 17–27 (SATQEPSTSSK). Positions 1–37 (MSTEPLSINPLSAKPLSATQEPSTSSKPSRREQRAAA) are disordered. Substrate contacts are provided by residues Asn261, Met290, Tyr319, His355, 375–377 (SRG), 416–419 (DGLR), and Glu455. Residue His459 coordinates Zn(2+). A substrate-binding site is contributed by Tyr482. His523 provides a ligand contact to Zn(2+). Residues Cys603, Cys606, and Cys611 each coordinate [4Fe-4S] cluster.

The protein belongs to the ThiC family. In terms of assembly, homodimer. It depends on [4Fe-4S] cluster as a cofactor.

It catalyses the reaction 5-amino-1-(5-phospho-beta-D-ribosyl)imidazole + S-adenosyl-L-methionine = 4-amino-2-methyl-5-(phosphooxymethyl)pyrimidine + CO + 5'-deoxyadenosine + formate + L-methionine + 3 H(+). It participates in cofactor biosynthesis; thiamine diphosphate biosynthesis. Functionally, catalyzes the synthesis of the hydroxymethylpyrimidine phosphate (HMP-P) moiety of thiamine from aminoimidazole ribotide (AIR) in a radical S-adenosyl-L-methionine (SAM)-dependent reaction. The polypeptide is Phosphomethylpyrimidine synthase (Pectobacterium atrosepticum (strain SCRI 1043 / ATCC BAA-672) (Erwinia carotovora subsp. atroseptica)).